An 83-amino-acid chain; its full sequence is Hainantoxin-III 6 (83 aa).

The first 21 residues, 1-21 (MKASMFLALAGLVLLFVVGYA), serve as a signal peptide directing secretion. A propeptide spanning residues 22–48 (SESEEKESPRELLSKIFAVDDFKGEER) is cleaved from the precursor. Intrachain disulfides connect C50–C65, C57–C70, and C64–C77. At L81 the chain carries Leucine amide.

Belongs to the neurotoxin 10 (Hwtx-1) family. 15 (Hntx-3) subfamily. As to quaternary structure, monomer. As to expression, expressed by the venom gland.

Its subcellular location is the secreted. Functionally, selective antagonist of neuronal tetrodotoxin (TTX)-sensitive voltage-gated sodium channels (IC(50)=1270 nM on Nav1.1/SCN1A, 270 nM on Nav1.2/SCN2A, 491 nM on Nav1.3/SCN3A and 232 nM on Nav1.7/SCN9A). This toxin suppress Nav1.7 current amplitude without significantly altering the activation, inactivation, and repriming kinetics. Short extreme depolarizations partially activate the toxin-bound channel, indicating voltage-dependent inhibition of this toxin. This toxin increases the deactivation of the Nav1.7 current after extreme depolarizations. The toxin-Nav1.7 complex is gradually dissociated upon prolonged strong depolarizations in a voltage-dependent manner, and the unbound toxin rebinds to Nav1.7 after a long repolarization. Moreover, analysis of chimeric channels showed that the DIIS3-S4 linker is critical for toxin binding to Nav1.7. These data are consistent with this toxin interacting with Nav1.7 site 4 and trapping the domain II voltage sensor in the closed state. The chain is Hainantoxin-III 6 from Cyriopagopus hainanus (Chinese bird spider).